A 371-amino-acid chain; its full sequence is Cytochrome b (371 aa).

4 consecutive transmembrane segments (helical) span residues Phe-25–Ile-45, Trp-69–Ile-90, Trp-105–Leu-125, and Phe-170–Ile-190. 2 residues coordinate heme b: His-75 and His-89. Heme b contacts are provided by His-174 and His-188. Position 193 (His-193) interacts with a ubiquinone. The next 4 helical transmembrane spans lie at Tyr-218–Ser-238, Leu-280–His-300, Leu-312–Thr-332, and Phe-339–Pro-358.

The protein belongs to the cytochrome b family. The cytochrome bc1 complex contains 3 respiratory subunits (MT-CYB, CYC1 and UQCRFS1), 2 core proteins (UQCRC1 and UQCRC2) and probably 6 low-molecular weight proteins. The cofactor is heme b.

It is found in the mitochondrion inner membrane. Component of the ubiquinol-cytochrome c reductase complex (complex III or cytochrome b-c1 complex) that is part of the mitochondrial respiratory chain. The b-c1 complex mediates electron transfer from ubiquinol to cytochrome c. Contributes to the generation of a proton gradient across the mitochondrial membrane that is then used for ATP synthesis. This Micrurus tener microgalbineus (Spotted coral snake) protein is Cytochrome b (MT-CYB).